A 218-amino-acid chain; its full sequence is Insulin-induced gene 2 protein (218 aa).

Topologically, residues 1-21 (MGDRENVSYGSRPILAQKMNL) are cytoplasmic. The chain crosses the membrane as a helical span at residues 22–44 (LLRGFLLFLIGVFLALVLNLLQV). The Lumenal portion of the chain corresponds to 45-63 (QRNVTLFPPDVLSSLFSSA). Residues 64 to 81 (WWVPLCCGTAAAAIGLLY) traverse the membrane as a helical segment. Over 82–96 (PCIDRHLGEPHKFKR) the chain is Cytoplasmic. A helical membrane pass occupies residues 97–119 (EWSSVMRCVAVFVGINHASAKVD). Residues 120–122 (FAN) are Lumenal-facing. Residues 123–141 (NMQLSLTLAALSIGLWWTF) form a helical membrane-spanning segment. Over 142–146 (DRSRS) the chain is Cytoplasmic. A helical membrane pass occupies residues 147 to 168 (GLGLGIGISFFATLVSQLLVYN). Residues 169-182 (GVYEYTAPDFLYVR) are Lumenal-facing. A helical transmembrane segment spans residues 183–200 (SWLPCIFFAGGITMGNIG). At 201 to 218 (RQLEMYERKALVEKSHRD) the chain is on the cytoplasmic side. The KxHxx signature appears at 212–218 (VEKSHRD).

Belongs to the INSIG family. Interacts with scap; interaction is direct and only takes place in the presence of sterols; it prevents interaction between scap and the coat protein complex II (COPII). Associates with the SCAP-SREBP complex; association is mediated via its interaction with scap and only takes place in the presence of sterols.

Its subcellular location is the endoplasmic reticulum membrane. In terms of biological role, oxysterol-binding protein that mediates feedback control of cholesterol synthesis by controlling both endoplasmic reticulum to Golgi transport of scap and degradation of hmgcr. Acts as a negative regulator of cholesterol biosynthesis by mediating the retention of the SCAP-SREBP complex in the endoplasmic reticulum, thereby blocking the processing of sterol regulatory element-binding proteins (SREBPs). Binds oxysterol, including 22-hydroxycholesterol, 24-hydroxycholesterol, 25-hydroxycholesterol and 27-hydroxycholesterol, regulating interaction with scap and retention of the SCAP-SREBP complex in the endoplasmic reticulum. In presence of oxysterol, interacts with scap, retaining the SCAP-SREBP complex in the endoplasmic reticulum, thereby preventing scap from escorting SREBPs to the Golgi. Sterol deprivation reduce oxysterol-binding, disrupting the interaction between insig2 and scap, thereby promoting Golgi transport of the SCAP-SREBP complex, followed by processing and nuclear translocation of SREBPs. Also regulates cholesterol synthesis by regulating degradation of hmgcr. The protein is Insulin-induced gene 2 protein of Xenopus laevis (African clawed frog).